The following is a 130-amino-acid chain: Small ribosomal subunit protein uS9 (130 aa).

It belongs to the universal ribosomal protein uS9 family.

This is Small ribosomal subunit protein uS9 from Shewanella halifaxensis (strain HAW-EB4).